The primary structure comprises 149 residues: MADQLTEEQIAEFKEAFSLFDKDGDGTITTKELGTVMRSLGQNPTEAELQDMINEVDADGNGTIDFPEFLTMMARKMKDTDSEEEIREAFRVFDKDGNGYISAAELRYVMTNLGEKLTDEXVDEMIREADIDGDGQVNYEEFVQMMTAK.

A2 is subject to N-acetylalanine. EF-hand domains follow at residues 8-43, 44-79, 81-116, and 117-149; these read EQIAEFKEAFSLFDKDGDGTITTKELGTVMRSLGQN, PTEAELQDMINEVDADGNGTIDFPEFLTMMARKMKD, DSEEEIREAFRVFDKDGNGYISAAELRYVMTNLGEK, and LTDEXVDEMIREADIDGDGQVNYEEFVQMMTAK. D21, D23, D25, T27, E32, D57, D59, N61, T63, E68, D94, D96, N98, Y100, and E105 together coordinate Ca(2+). At K116 the chain carries N6,N6,N6-trimethyllysine. Ca(2+) contacts are provided by D130, D132, D134, Q136, and E141.

This sequence belongs to the calmodulin family.

In terms of biological role, calmodulin acts as part of a calcium signal transduction pathway by mediating the control of a large number of enzymes, ion channels, aquaporins and other proteins through calcium-binding. Calcium-binding is required for the activation of calmodulin. Among the enzymes to be stimulated by the calmodulin-calcium complex are a number of protein kinases, such as myosin light-chain kinases and calmodulin-dependent protein kinase type II (CaMK2), and phosphatases. The polypeptide is Calmodulin (calm) (Oreochromis mossambicus (Mozambique tilapia)).